The following is a 348-amino-acid chain: Thioesterase-like protein TwmA (348 aa).

It participates in secondary metabolite biosynthesis. In terms of biological role, thioesterase-like protein; part of the gene cluster that mediates the biosynthesis of wortmanamides A and B, reduced long-chain polyketides amidated with a specific omega-amino acid, 5-aminopentanoic acid (5PA). The PKS modules of TwmB are involved in the synthesis of the polyketide backbone, whereas the non-canonical C domain of TwmB is a bonafide condensation domain that specifically selects 5PA and catalyzes amidation to release polyketide chain. The C domain clearly prefers C16 and C18 fatty acyl substrates, which is consistent with simultaneous formation of both octaketide and nonaketide acyl amides wortmanamides A and B. Because TwmB lacks a designated enoylreductase (ER) domain, the required activity is provided the enoyl reductase TwmE. The roles of the remaining enzymes have still to be clarified. This Talaromyces wortmannii (Penicillium wortmannii) protein is Thioesterase-like protein TwmA.